The following is a 251-amino-acid chain: Sugar fermentation stimulation protein homolog (251 aa).

Belongs to the SfsA family.

This is Sugar fermentation stimulation protein homolog from Yersinia pseudotuberculosis serotype O:1b (strain IP 31758).